We begin with the raw amino-acid sequence, 100 residues long: NADH-quinone oxidoreductase subunit K 2 (100 aa).

The next 3 membrane-spanning stretches (helical) occupy residues 2 to 22 (LAIE…TIGV), 29 to 49 (IVIF…FIAF), and 61 to 81 (FVFF…ALMI).

Belongs to the complex I subunit 4L family. As to quaternary structure, NDH-1 is composed of 14 different subunits. Subunits NuoA, H, J, K, L, M, N constitute the membrane sector of the complex.

The protein localises to the cell inner membrane. The catalysed reaction is a quinone + NADH + 5 H(+)(in) = a quinol + NAD(+) + 4 H(+)(out). In terms of biological role, NDH-1 shuttles electrons from NADH, via FMN and iron-sulfur (Fe-S) centers, to quinones in the respiratory chain. The immediate electron acceptor for the enzyme in this species is believed to be ubiquinone. Couples the redox reaction to proton translocation (for every two electrons transferred, four hydrogen ions are translocated across the cytoplasmic membrane), and thus conserves the redox energy in a proton gradient. The polypeptide is NADH-quinone oxidoreductase subunit K 2 (Geobacter sp. (strain M21)).